We begin with the raw amino-acid sequence, 651 residues long: Aspartate--tRNA ligase, mitochondrial (651 aa).

The transit peptide at 1–44 (MFCWLSRLCGELSTPTRRTTQLIWSSAARSMVLSSQRIPELSSF) directs the protein to the mitochondrion. A Phosphothreonine modification is found at threonine 216. A Phosphoserine modification is found at serine 239. Positions 241-244 (QQFK) are aspartate. Arginine 263 provides a ligand contact to L-aspartate. 263-265 (RDE) contacts ATP. The residue at position 379 (lysine 379) is an N6-acetyllysine. Residue glutamate 532 participates in ATP binding. Residue arginine 539 coordinates L-aspartate. 581 to 584 (GLDR) is a binding site for ATP.

This sequence belongs to the class-II aminoacyl-tRNA synthetase family. Type 1 subfamily. In terms of assembly, homodimer.

The protein resides in the mitochondrion matrix. It localises to the mitochondrion membrane. It carries out the reaction tRNA(Asp) + L-aspartate + ATP = L-aspartyl-tRNA(Asp) + AMP + diphosphate. Functionally, catalyzes the attachment of aspartate to tRNA(Asp) in a two-step reaction: aspartate is first activated by ATP to form Asp-AMP and then transferred to the acceptor end of tRNA(Asp). This is Aspartate--tRNA ligase, mitochondrial (DARS2) from Bos taurus (Bovine).